Consider the following 199-residue polypeptide: Adenylate kinase (199 aa).

8 to 13 (GAGKGT) contacts ATP. Residues 28 to 57 (STGDIFRANIKNKTELGQQVKAIVDAGDYV) are NMP. Residues Thr29, Arg34, 55-57 (DYV), 83-86 (GYPR), and Gln90 each bind AMP. Positions 124–134 (KRAREQGRADD) are LID. Position 125 (Arg125) interacts with ATP. Positions 131 and 142 each coordinate AMP. Residue Gly170 coordinates ATP.

The protein belongs to the adenylate kinase family. In terms of assembly, monomer.

The protein resides in the cytoplasm. It catalyses the reaction AMP + ATP = 2 ADP. It participates in purine metabolism; AMP biosynthesis via salvage pathway; AMP from ADP: step 1/1. Its function is as follows. Catalyzes the reversible transfer of the terminal phosphate group between ATP and AMP. Plays an important role in cellular energy homeostasis and in adenine nucleotide metabolism. The protein is Adenylate kinase of Leifsonia xyli subsp. xyli (strain CTCB07).